The following is a 164-amino-acid chain: Peptidyl-prolyl cis-trans isomerase A (164 aa).

At Met1 the chain carries N-acetylmethionine. An N-acetylvaline; in Peptidyl-prolyl cis-trans isomerase A, N-terminally processed modification is found at Val2. Residues 7 to 163 form the PPIase cyclophilin-type domain; sequence FFDIAVDGEP…KKITIADCGQ (157 aa). An N6-acetyllysine; alternate modification is found at Lys28. Residue Lys28 forms a Glycyl lysine isopeptide (Lys-Gly) (interchain with G-Cter in SUMO2); alternate linkage. Lys28 participates in a covalent cross-link: Glycyl lysine isopeptide (Lys-Gly) (interchain with G-Cter in ubiquitin); alternate. Lys44 and Lys76 each carry N6-acetyllysine. Cys62 and Cys161 form a disulfide bridge. Ser77 carries the phosphoserine modification. Lys82 carries the post-translational modification N6-acetyllysine; alternate. Lys82 is covalently cross-linked (Glycyl lysine isopeptide (Lys-Gly) (interchain with G-Cter in SUMO2); alternate). Thr93 is subject to Phosphothreonine. Asn108 carries N-linked (GlcNAc...) asparagine glycosylation. Lys125, Lys131, and Lys133 each carry N6-acetyllysine.

The protein belongs to the cyclophilin-type PPIase family. PPIase A subfamily. In terms of assembly, interacts with protein phosphatase PPP3CA/calcineurin A. Interacts with isoform 2 of BSG/CD147. Interacts with FOXO1; the interaction promotes FOXO1 dephosphorylation, nuclear accumulation and transcriptional activity. Interacts with integrin ITGA2B:ITGB3; the interaction is ROS and peptidyl-prolyl cis-trans isomerase (PPIase) activity-dependent and is increased in the presence of thrombin. Interacts with MAP3K5. Interacts with TARDBP; the interaction is dependent on the RNA-binding activity of TARDBP and the PPIase activity of PPIA/CYPA and the acetylation of PPIA/CYPA at Lys-125 favors the interaction. Interacts with HNRNPA1, HNRNPA2B1, HNRNPC, RBMX, HNRNPK and HNRNPM. In terms of processing, acetylation at Lys-125 markedly inhibits catalysis of cis to trans isomerization. PPIA acetylation also antagonizes the immunosuppressive effects of cyclosporine by inhibiting the sequential steps of cyclosporine binding and calcineurin inhibition. Acetylation at Lys-125 favors the interaction with TARDBP.

The protein resides in the cytoplasm. The protein localises to the secreted. Its subcellular location is the nucleus. The catalysed reaction is [protein]-peptidylproline (omega=180) = [protein]-peptidylproline (omega=0). With respect to regulation, binds cyclosporin A (CsA). CsA mediates some of its effects via an inhibitory action on PPIase. In terms of biological role, catalyzes the cis-trans isomerization of proline imidic peptide bonds in oligopeptides. Exerts a strong chemotactic effect on leukocytes partly through activation of one of its membrane receptors BSG/CD147, initiating a signaling cascade that culminates in MAPK/ERK activation. Activates endothelial cells (ECs) in a proinflammatory manner by stimulating activation of NF-kappa-B and ERK, JNK and p38 MAP-kinases and by inducing expression of adhesion molecules including SELE and VCAM1. Induces apoptosis in ECs by promoting the FOXO1-dependent expression of CCL2 and BCL2L11 which are involved in EC chemotaxis and apoptosis. In response to oxidative stress, initiates proapoptotic and antiapoptotic signaling in ECs via activation of NF-kappa-B and AKT1 and up-regulation of antiapoptotic protein BCL2. Negatively regulates MAP3K5/ASK1 kinase activity, autophosphorylation and oxidative stress-induced apoptosis mediated by MAP3K5/ASK1. Necessary for the assembly of TARDBP in heterogeneous nuclear ribonucleoprotein (hnRNP) complexes and regulates TARDBP binding to RNA UG repeats and TARDBP-dependent expression of HDAC6, ATG7 and VCP which are involved in clearance of protein aggregates. Plays an important role in platelet activation and aggregation. Regulates calcium mobilization and integrin ITGA2B:ITGB3 bidirectional signaling via increased ROS production as well as by facilitating the interaction between integrin and the cell cytoskeleton. Binds heparan sulfate glycosaminoglycans. In Bos taurus (Bovine), this protein is Peptidyl-prolyl cis-trans isomerase A (PPIA).